A 289-amino-acid chain; its full sequence is Early E1A protein (289 aa).

An interaction with RB1 in competition with E2F1 region spans residues 41–49 (PTLHELYDL). The tract at residues 76 to 140 (EGIDLLTFPP…PSDDEDEEGE (65 aa)) is interaction with UBE2I. A disordered region spans residues 82–107 (TFPPAPGSPEPPHLSRQPEQPEQRAL). Pro residues predominate over residues 84 to 93 (PPAPGSPEPP). The residue at position 89 (S89) is a Phosphoserine; by host. The PXLXP motif, interaction with host ZMYND11 signature appears at 113-117 (PNLVP). The LXCXE motif, interaction with host RB1 and TMEM173/STING signature appears at 122–126 (LTCHE). A zinc finger spans residues 154–174 (CRSCHYHRRNTGDPDIMCSLC). Positions 187–245 (VSEPEPEPEPEPEPARPTRRPKLVPAILRRPTSPVSRECNSSTDSCDSGPSNTPPEIHP) are disordered. Phosphoserine; by host occurs at positions 219 and 231. A compositionally biased stretch (polar residues) spans 219–237 (SPVSRECNSSTDSCDSGPS). The Bipartite nuclear localization signal motif lies at 258 to 289 (RVGGRRQAVECIEDLLNESGQPLDLSCKRPRP). The PXDLS motif, CTBP-binding signature appears at 279–283 (PLDLS).

This sequence belongs to the adenoviridae E1A protein family. In terms of assembly, interacts with host UBE2I; this interaction interferes with polySUMOylation. Interacts with host RB1; this interaction induces the aberrant dissociation of RB1-E2F1 complex thereby disrupting the activity of RB1 and activating E2F1-regulated genes. Interacts with host ATF7; the interaction enhances ATF7-mediated viral transactivation activity which requires the zinc binding domains of both proteins. Isoform early E1A 32 kDa protein and isoform early E1A 26 kDa protein interact (via N-terminus) with CUL1 and E3 ubiquitin ligase RBX1; these interactions inhibit RBX1-CUL1-dependent elongation reaction of ubiquitin chains and attenuate ubiquitination of SCF(FBXW7) target proteins. Interacts (via PXLXP motif) with host ZMYND11/BS69 (via MYND-type zinc finger); this interaction inhibits E1A mediated transactivation. Interacts with host EP300; this interaction stimulates the acetylation of RB1 by recruiting EP300 and RB1 into a multimeric-protein complex. Interacts with host CTBP1 and CTBP2; this interaction seems to potentiate viral replication. Interacts with host DCAF7. Interacts with host DYRK1A. Interacts with host KPNA4; this interaction allows E1A import into the host nucleus. Interacts with host EP400; this interaction stabilizes MYC. Interacts (via LXCXE motif) with host TMEM173/STING; this interaction impairs the ability of TMEM173/STING to sense cytosolic DNA and promote the production of type I interferon (IFN-alpha and IFN-beta). Interacts (via C-terminus) with host ZBED1/hDREF (via C-terminus); the interaction is direct.

Its subcellular location is the host nucleus. Functionally, plays a role in viral genome replication by driving entry of quiescent cells into the cell cycle. Stimulation of progression from G1 to S phase allows the virus to efficiently use the cellular DNA replicating machinery to achieve viral genome replication. E1A protein has both transforming and trans-activating activities. Induces the disassembly of the E2F1 transcription factor from RB1 by direct competition for the same binding site on RB1, with subsequent transcriptional activation of E2F1-regulated S-phase genes and of the E2 region of the adenoviral genome. Release of E2F1 leads to the ARF-mediated inhibition of MDM2 and causes TP53/p53 to accumulate because it is not targeted for degradation by MDM2-mediated ubiquitination anymore. This increase in TP53, in turn, would arrest the cell proliferation and direct its death but this effect is counteracted by the viral protein E1B-55K. Inactivation of the ability of RB1 to arrest the cell cycle is critical for cellular transformation, uncontrolled cellular growth and proliferation induced by viral infection. Interaction with RBX1 and CUL1 inhibits ubiquitination of the proteins targeted by SCF(FBXW7) ubiquitin ligase complex, and may be linked to unregulated host cell proliferation. The tumorigenesis-restraining activity of E1A may be related to the disruption of the host CtBP-CtIP complex through the CtBP binding motif. Interacts with host TBP protein; this interaction probably disrupts the TBP-TATA complex. Interaction with host TMEM173/STING impairs the ability of TMEM173/STING to sense cytosolic DNA and promote the production of type I interferon (IFN-alpha and IFN-beta). Promotes the sumoylation of host ZBED1/hDREF with SUMO1. The sequence is that of Early E1A protein from Homo sapiens (Human).